A 90-amino-acid chain; its full sequence is Putative defensin-like protein 64 (90 aa).

Positions 1–23 (MWGRQIVLKIFFLVLSCVIVIET) are cleaved as a signal peptide. 2 disulfide bridges follow: Cys-33-Cys-56 and Cys-42-Cys-77.

The protein belongs to the DEFL family.

The protein resides in the secreted. The sequence is that of Putative defensin-like protein 64 from Arabidopsis thaliana (Mouse-ear cress).